The following is an 800-amino-acid chain: MSSSPVNVKKLKVSELKEELKKRRLSDKGLKADLMDRLQAALDNEAGGRPAMEPGNGSLDLGGDAAGRSGAGLEQEAAAGAEDDEEEEGIAALDGDQMELGEENGAAGAADAGAMEEEEAASEDENGDDQGFQEGEDELGDEEEGAGDENGHGEQQSQPPAAAAQQQPSQQRGAGKEAAGKSSGPTSLFAVTVAPPGARQGQQQAGGDGKTEQKGGDKKRGVKRPREDHGRGYFEYIEENKYSRAKSPQPPVEEEDEHFDDTVVCLDTYNCDLHFKISRDRLSASSLTMESFAFLWAGGRASYGVSKGKVCFEMKVTEKIPVRHLYTKDIDIHEVRIGWSLTTSGMLLGEEEFSYGYSLKGIKTCNCETEDYGEKFDENDVITCFANFETDEVELSYAKNGQDLGVAFKISKEVLADRPLFPHVLCHNCAVEFNFGQKEKPYFPIPEDCTFIQNVPLEDRVRGPKGPEEKKDCEVVMMIGLPGAGKTTWVTKHAAENPGKYNILGTNTIMDKMMVAGFKKQMADTGKLNTLLQRAPQCLGKFIEIAARKKRNFILDQTNVSAAAQRRKMCLFAGFQRKAVVVCPKDEDYKQRTQKKAEVEGKDLPEHAVLKMKGNFTLPEVAECFDEITYVELQKEEAQKLLEQYKEESKKALPPEKKQNTGSKKSNKNKSGKNQFNRGGGHRGRGGFNMRGGNFRGGAPGNRGGYNRRGNMPQRGGGGGSGGIGYPYPRGPVFPGRGGYSNRGNYNRGGMPNRGNYNQNFRGRGNNRGYKNQSQGYNQWQQGQFWGQKPWSQHYHQGYY.

Position 2 is an N-acetylserine (S2). Position 4 is a phosphoserine (S4). Residues 8–42 (VKKLKVSELKEELKKRRLSDKGLKADLMDRLQAAL) enclose the SAP domain. An N6-acetyllysine mark is found at K17 and K21. Residues 41 to 257 (ALDNEAGGRP…PQPPVEEEDE (217 aa)) are disordered. Residue S58 is modified to Phosphoserine. Low complexity-rich tracts occupy residues 71-80 (AGLEQEAAAG) and 103-113 (ENGAAGAADAG). Acidic residues-rich tracts occupy residues 114–128 (AMEE…ENGD) and 134–147 (EGED…EGAG). Residues 153 to 173 (GEQQSQPPAAAAQQQPSQQRG) show a composition bias toward low complexity. K181 bears the N6-acetyllysine mark. S182 bears the ADP-ribosylserine mark. Positions 194–205 (APPGARQGQQQA) are enriched in low complexity. The span at 209-242 (GKTEQKGGDKKRGVKRPREDHGRGYFEYIEENKY) shows a compositional bias: basic and acidic residues. R231 carries the citrulline modification. N6-acetyllysine; alternate is present on K241. Residue K241 forms a Glycyl lysine isopeptide (Lys-Gly) (interchain with G-Cter in SUMO1); alternate linkage. K241 is covalently cross-linked (Glycyl lysine isopeptide (Lys-Gly) (interchain with G-Cter in SUMO2); alternate). Y242 carries the post-translational modification Phosphotyrosine. A phosphoserine mark is found at S243 and S247. A B30.2/SPRY domain is found at 244-440 (RAKSPQPPVE…VEFNFGQKEK (197 aa)). T262 bears the Phosphothreonine mark. K328 is subject to N6-acetyllysine. The tract at residues 464–648 (PKGPEEKKDC…QKLLEQYKEE (185 aa)) is ATPase domain. K471 participates in a covalent cross-link: Glycyl lysine isopeptide (Lys-Gly) (interchain with G-Cter in SUMO2). Position 480–487 (480–487 (GLPGAGKT)) interacts with ATP. 2 positions are modified to N6-acetyllysine; alternate: K492 and K500. Glycyl lysine isopeptide (Lys-Gly) (interchain with G-Cter in SUMO2); alternate cross-links involve residues K492 and K500. Residue T508 is modified to Phosphothreonine. Residue K512 forms a Glycyl lysine isopeptide (Lys-Gly) (interchain with G-Cter in SUMO2) linkage. K527 is modified (N6-acetyllysine). Position 541 is an N6-acetyllysine; alternate (K541). K541 participates in a covalent cross-link: Glycyl lysine isopeptide (Lys-Gly) (interchain with G-Cter in SUMO2); alternate. Residue K550 forms a Glycyl lysine isopeptide (Lys-Gly) (interchain with G-Cter in SUMO2) linkage. Phosphothreonine is present on T558. Residues K585 and K602 each participate in a glycyl lysine isopeptide (Lys-Gly) (interchain with G-Cter in SUMO2) cross-link. The actin-binding stretch occupies residues 587–602 (EDYKQRTQKKAEVEGK). K611 is modified (N6-acetyllysine; alternate). A Glycyl lysine isopeptide (Lys-Gly) (interchain with G-Cter in SUMO2); alternate cross-link involves residue K611. Residues 626 to 653 (DEITYVELQKEEAQKLLEQYKEESKKAL) adopt a coiled-coil conformation. Residues K640 and K646 each participate in a glycyl lysine isopeptide (Lys-Gly) (interchain with G-Cter in SUMO2) cross-link. A compositionally biased stretch (basic and acidic residues) spans 647–659 (EESKKALPPEKKQ). The segment at 647–729 (EESKKALPPE…GSGGIGYPYP (83 aa)) is disordered. Omega-N-methylarginine is present on R678. The span at 686–704 (GGFNMRGGNFRGGAPGNRG) shows a compositional bias: gly residues. Residues 690-715 (MRGGNFRGGAPGNRGGYNRRGNMPQR) are RNA-binding RGG-box. Residues R691, R696, and R703 each carry the asymmetric dimethylarginine modification. 2 positions are modified to asymmetric dimethylarginine; alternate: R709 and R715. Omega-N-methylarginine; alternate occurs at positions 709 and 715. Over residues 715–725 (RGGGGGSGGIG) the composition is skewed to gly residues. R730 and R737 each carry asymmetric dimethylarginine. The disordered stretch occupies residues 745–774 (NYNRGGMPNRGNYNQNFRGRGNNRGYKNQS). The residue at position 789 (K789) is an N6-acetyllysine; alternate. A Glycyl lysine isopeptide (Lys-Gly) (interchain with G-Cter in SUMO2); alternate cross-link involves residue K789.

As to quaternary structure, oligomer (via ATPase domain and RNA-binding RGG-box region); oligomerization occurs upon ATP-binding in a chromatin-associated RNAs (caRNAs)- and transcription-dependent manner and is required for chromatin decompaction. ATP hydrolysis is required to cycle from an oligomeric to monomeric state to compact chromatin. Component of the coding region determinant (CRD)-mediated complex, composed of DHX9, HNRNPU, IGF2BP1, SYNCRIP and YBX1. Identified in the spliceosome C complex. Identified in a IGF2BP1-dependent mRNP granule complex containing untranslated mRNAs. Associates with heterogeneous nuclear ribonucleoprotein (hnRNP) particles. Associates (via middle region) with the C-terminal domain (CTD) RNA polymerase II (Pol II) holoenzyme; this association occurs in a RNA-independent manner. Associates (via middle region) with the core-TFIIH basal transcription factor complex; this association inhibits the CTD phosphorylation of RNA polymerase II holoenzyme by down-regulating TFIIH kinase activity. Associates with the telomerase holoenzyme complex. Associates with spindle microtubules (MTs) in a TPX2-dependent manner. Interacts (via C-terminus) with actin; this interaction is direct and mediates association with the phosphorylated CTD of RNA polymerase II and is disrupted in presence of the long non-coding H19 RNA. Interacts with AURKA. Interacts (via C-terminus) with CBX5; this interaction is, at least in part, RNA-dependent. Interacts with CR2. Interacts with CRY1. Interacts (via C-terminus) with EP300; this interaction enhances DNA-binding to nuclear scaffold/matrix attachment region (S/MAR) elements. Interacts with ERBB4. Interacts with GEMIN5. Interacts with IGF2BP1. Interacts with IGF2BP2 and IGF2BP3. Interacts with NCL; this interaction occurs during mitosis. Interacts (via C-terminus) with NR3C1 (via C-terminus). Interacts with PLK1; this interaction induces phosphorylation of HNRNPU at Ser-58 in mitosis. Interacts with POU3F4. Interacts with SMARCA4; this interaction occurs in embryonic stem cells and stimulates global Pol II-mediated transcription. Interacts (via C-terminus) with TOP2A; this interaction protects the topoisomerase TOP2A from degradation and positively regulates the relaxation of supercoiled DNA by TOP2A in a RNA-dependent manner. Interacts with TPX2; this interaction recruits HNRNPU to spindle microtubules (MTs). Interacts with UBQLN2. Interacts (via RNA-binding RGG-box region) with ZBTB7B; the interaction facilitates the recruitment of long non-coding RNA Blnc1 by ZBTB7B. Interacts with ERCC6. In terms of processing, cleaved at Asp-94 by CASP3 during T-cell apoptosis, resulting in a loss of DNA- and chromatin-binding activities. Extensively phosphorylated. Phosphorylated on Ser-58 by PLK1 and dephosphorylated by protein phosphatase 2A (PP2A) in mitosis. Post-translationally, arg-709 and Arg-715 are dimethylated, probably to asymmetric dimethylarginine. In terms of processing, citrullinated by PADI4.

Its subcellular location is the nucleus. The protein localises to the nucleus matrix. It localises to the chromosome. It is found in the nucleus speckle. The protein resides in the cytoplasm. Its subcellular location is the cytoskeleton. The protein localises to the microtubule organizing center. It localises to the centrosome. It is found in the centromere. The protein resides in the kinetochore. Its subcellular location is the spindle. The protein localises to the spindle pole. It localises to the midbody. It is found in the cell surface. The protein resides in the cytoplasmic granule. Its function is as follows. DNA- and RNA-binding protein involved in several cellular processes such as nuclear chromatin organization, telomere-length regulation, transcription, mRNA alternative splicing and stability, Xist-mediated transcriptional silencing and mitotic cell progression. Plays a role in the regulation of interphase large-scale gene-rich chromatin organization through chromatin-associated RNAs (caRNAs) in a transcription-dependent manner, and thereby maintains genomic stability. Required for the localization of the long non-coding Xist RNA on the inactive chromosome X (Xi) and the subsequent initiation and maintenance of X-linked transcriptional gene silencing during X-inactivation. Plays a role as a RNA polymerase II (Pol II) holoenzyme transcription regulator. Promotes transcription initiation by direct association with the core-TFIIH basal transcription factor complex for the assembly of a functional pre-initiation complex with Pol II in a actin-dependent manner. Blocks Pol II transcription elongation activity by inhibiting the C-terminal domain (CTD) phosphorylation of Pol II and dissociates from Pol II pre-initiation complex prior to productive transcription elongation. Positively regulates CBX5-induced transcriptional gene silencing and retention of CBX5 in the nucleus. Negatively regulates glucocorticoid-mediated transcriptional activation. Key regulator of transcription initiation and elongation in embryonic stem cells upon leukemia inhibitory factor (LIF) signaling. Involved in the long non-coding RNA H19-mediated Pol II transcriptional repression. Participates in the circadian regulation of the core clock component BMAL1 transcription. Plays a role in the regulation of telomere length. Plays a role as a global pre-mRNA alternative splicing modulator by regulating U2 small nuclear ribonucleoprotein (snRNP) biogenesis. Plays a role in mRNA stability. Component of the CRD-mediated complex that promotes MYC mRNA stabilization. Enhances the expression of specific genes, such as tumor necrosis factor TNFA, by regulating mRNA stability, possibly through binding to the 3'-untranslated region (UTR). Plays a role in mitotic cell cycle regulation. Involved in the formation of stable mitotic spindle microtubules (MTs) attachment to kinetochore, spindle organization and chromosome congression. Phosphorylation at Ser-58 by PLK1 is required for chromosome alignement and segregation and progression through mitosis. Also contributes to the targeting of AURKA to mitotic spindle MTs. Binds to double- and single-stranded DNA and RNA, poly(A), poly(C) and poly(G) oligoribonucleotides. Binds to chromatin-associated RNAs (caRNAs). Associates with chromatin to scaffold/matrix attachment region (S/MAR) elements in a chromatin-associated RNAs (caRNAs)-dependent manner. Binds (via RNA-binding RGG-box region) to the long non-coding Xist RNA; this binding is direct and bridges the Xist RNA and the inactive chromosome X (Xi). Binds the long non-coding H19 RNA. Binds to SMN1/2 pre-mRNAs at G/U-rich regions. Binds to small nuclear RNAs (snRNAs). Binds to the 3'-UTR of TNFA mRNA. Also negatively regulates embryonic stem cell differentiation upon LIF signaling. Required for embryonic development. Binds to brown fat long non-coding RNA 1 (Blnc1); facilitates the recruitment of Blnc1 by ZBTB7B required to drive brown and beige fat development and thermogenesis. This chain is Heterogeneous nuclear ribonucleoprotein U, found in Mus musculus (Mouse).